The sequence spans 2711 residues: Chromodomain-helicase-DNA-binding protein 6 (2711 aa).

4 stretches are compositionally biased toward basic and acidic residues: residues 1–12, 100–115, 122–151, and 158–171; these read MKMKIQKKEKQL, EPGE…DREP, EPKE…DGVK, and EASG…KRSC. Disordered stretches follow at residues 1 to 52 and 66 to 243; these read MKMK…EEAA and EEAD…QVKR. A required for DNA-dependent ATPase activity region spans residues 1–746; that stretch reads MKMKIQKKEK…MMELRKCCNH (746 aa). The segment covering 214 to 224 has biased composition (low complexity); that stretch reads SLPNPSLQSPE. Chromo domains lie at 291–342 and 374–438; these read NIIE…KDPR and IEID…KHVE. The Helicase ATP-binding domain maps to 472–646; the sequence is LFNWYNRKNC…FSLLNFLEPS (175 aa). Position 485-492 (485-492) interacts with ATP; that stretch reads DEMGLGKT. Positions 597–600 match the DEAH box motif; that stretch reads DEAH. The 170-residue stretch at 786–955 folds into the Helicase C-terminal domain; sequence LIDKLLPKLI…LSKMEVEDLL (170 aa). The segment at 1318–1389 is disordered; it reads SLSAEQGVTD…SDPDKSPWPV (72 aa). Positions 1320–1329 are enriched in polar residues; that stretch reads SAEQGVTDGT. Basic and acidic residues predominate over residues 1332–1350; sequence IPERGNIDKEDSAEDKLDG. One can recognise a Myb-like domain in the interval 1448–1502; it reads RWTRREQADFYRTVSSFGVVYDQEKKAFDWTQFRIISRLDKKSDESLEHYFYSFV. Phosphoserine is present on Ser1865. Disordered stretches follow at residues 1951–1978, 1997–2059, 2124–2147, 2321–2350, 2373–2419, 2550–2602, and 2641–2711; these read SEDS…TVEG, EPWK…ASGI, LPTP…ATEH, TTLS…QAEK, GFGT…RGFL, SASL…ITTS, and RHSE…EDTN. Basic and acidic residues predominate over residues 2017–2036; that stretch reads SEPKPEDMDFENKDDYEKDG. Composition is skewed to low complexity over residues 2130–2140 and 2333–2349; these read SSSAGSRSSLS and ATSS…SQAE. Positions 2550–2563 are enriched in low complexity; the sequence is SASLASTKSGTSAT. Residues 2565–2586 show a composition bias toward basic and acidic residues; sequence KSTEDKLSGHDVNTDALVDDKP. 2 stretches are compositionally biased toward polar residues: residues 2591–2602 and 2677–2688; these read FSDQSEPTITTS and SDQNCTESSATV. Basic and acidic residues predominate over residues 2690–2711; it reads PEREHVAQAREEGLKDSNEDTN.

It belongs to the SNF2/RAD54 helicase family. In terms of assembly, interacts with NFE2L2; involved in activation of the transcription. In terms of tissue distribution, widely expressed.

Its subcellular location is the nucleus. It is found in the nucleoplasm. It catalyses the reaction ATP + H2O = ADP + phosphate + H(+). Its function is as follows. ATP-dependent chromatin-remodeling factor. Regulates transcription by disrupting nucleosomes in a largely non-sliding manner which strongly increases the accessibility of chromatin. Activates transcription of specific genes in response to oxidative stress through interaction with NFE2L2. In Mus musculus (Mouse), this protein is Chromodomain-helicase-DNA-binding protein 6 (Chd6).